Here is a 133-residue protein sequence, read N- to C-terminus: ATP synthase epsilon chain, chloroplastic (133 aa).

Belongs to the ATPase epsilon chain family. As to quaternary structure, F-type ATPases have 2 components, CF(1) - the catalytic core - and CF(0) - the membrane proton channel. CF(1) has five subunits: alpha(3), beta(3), gamma(1), delta(1), epsilon(1). CF(0) has three main subunits: a, b and c.

Its subcellular location is the plastid. The protein resides in the chloroplast thylakoid membrane. In terms of biological role, produces ATP from ADP in the presence of a proton gradient across the membrane. The polypeptide is ATP synthase epsilon chain, chloroplastic (Nicotiana tomentosiformis (Tobacco)).